A 269-amino-acid chain; its full sequence is Protein OPG079 (269 aa).

Belongs to the orthopoxvirus OPG079 family. Homoomultimer (Potential). Interacts with the small subunit of ribonucleotide reductase. Interacts with host FAM111A; this interaction protomtes OPG079 degradation through autophagy.

The protein resides in the host cytoplasm. Functionally, plays an essential role in viral DNA replication. Binds to ssDNA with high affinity and localizes to cytoplasmic factories where nascent viral genomes accumulate. May disrupt loops, hairpins and other secondary structures present on ssDNA to reduce and eliminate pausing of viral DNA polymerase at specific sites during elongation. The sequence is that of Protein OPG079 (OPG079) from Vaccinia virus (strain Copenhagen) (VACV).